The chain runs to 33 residues: Beta-theraphotoxin-Cm1a (33 aa).

Disulfide bonds link Cys2/Cys17, Cys9/Cys22, and Cys16/Cys29. The residue at position 33 (Leu33) is a Leucine amide.

Belongs to the neurotoxin 10 (Hwtx-1) family. 04 (CcoTx1) subfamily. Expressed by the venom gland.

It is found in the secreted. Functionally, inhibits many voltage-gated sodium channels and one voltage-gated calcium channel (Cav2.2/CACNA1B (IC(50)=400 nM), Nav1.2/SCN2A (IC(50)=3-70 nM), Nav1.1/SCN1A (IC(50)=523-1060 nM), Nav1.7/SCN9A (IC(50)=129.1-5120 nM), Nav1.4/SCN4A (IC(50)=263-888 nM or &gt;10 uM) and Nav1.5/SCN5A (IC(50)=188-323 nM or &gt;10 uM)). It acts by shifting the voltage dependence of channel activation to more depolarized potentials and by blocking the inward component of the sodium current. It shows moderate affinity for lipid bilayers. On Nav1.7/SCN9A, it has been shown to interact with the S3-S4 loop of domain DII (site 4). Is significantly more potent against Nav1.2/SCN2A than the other Nav channel subtypes. In vivo, this toxin causes general ataxia, lack of response to stimuli, and semiparalysis. After a few minutes, the mice are unable to stand, and breathing is reduced in rhythm and intensity. Symptoms gradually increase with progressive slowing of breathing and flaccid paralysis, death occurred within 10 to 20 minutes post injection. Animals remain totally flaccid, and no symptoms of excitatory neurotoxicity are observed. The polypeptide is Beta-theraphotoxin-Cm1a (Ceratogyrus marshalli (Straighthorned baboon tarantula)).